We begin with the raw amino-acid sequence, 340 residues long: DNA-directed RNA polymerase subunit alpha (340 aa).

Positions 1–233 (MYRNWRDLIS…EQLSIFINFD (233 aa)) are alpha N-terminal domain (alpha-NTD). The interval 251 to 340 (INENLYRSVD…RLRGERKDEE (90 aa)) is alpha C-terminal domain (alpha-CTD).

The protein belongs to the RNA polymerase alpha chain family. As to quaternary structure, homodimer. The RNAP catalytic core consists of 2 alpha, 1 beta, 1 beta' and 1 omega subunit. When a sigma factor is associated with the core the holoenzyme is formed, which can initiate transcription.

The catalysed reaction is RNA(n) + a ribonucleoside 5'-triphosphate = RNA(n+1) + diphosphate. Functionally, DNA-dependent RNA polymerase catalyzes the transcription of DNA into RNA using the four ribonucleoside triphosphates as substrates. This is DNA-directed RNA polymerase subunit alpha from Geobacter sulfurreducens (strain ATCC 51573 / DSM 12127 / PCA).